We begin with the raw amino-acid sequence, 378 residues long: Homoserine O-acetyltransferase (378 aa).

In terms of domain architecture, AB hydrolase-1 spans 52 to 337; that stretch reads NAILICHALT…YSQHGHDTFL (286 aa). Catalysis depends on serine 148, which acts as the Nucleophile. Arginine 217 contacts substrate. Residues aspartate 304 and histidine 333 contribute to the active site. Aspartate 334 contacts substrate.

Belongs to the AB hydrolase superfamily. MetX family. In terms of assembly, homodimer.

The protein localises to the cytoplasm. The catalysed reaction is L-homoserine + acetyl-CoA = O-acetyl-L-homoserine + CoA. It participates in amino-acid biosynthesis; L-methionine biosynthesis via de novo pathway; O-acetyl-L-homoserine from L-homoserine: step 1/1. Transfers an acetyl group from acetyl-CoA to L-homoserine, forming acetyl-L-homoserine. The chain is Homoserine O-acetyltransferase from Chloroherpeton thalassium (strain ATCC 35110 / GB-78).